The following is a 433-amino-acid chain: Serine--tRNA ligase (433 aa).

236–238 is a binding site for L-serine; sequence TAE. 267–269 contacts ATP; sequence RSE. Glu290 contributes to the L-serine binding site. 354–357 contributes to the ATP binding site; it reads EISS. Ser394 contributes to the L-serine binding site.

Belongs to the class-II aminoacyl-tRNA synthetase family. Type-1 seryl-tRNA synthetase subfamily. Homodimer. The tRNA molecule binds across the dimer.

Its subcellular location is the cytoplasm. The enzyme catalyses tRNA(Ser) + L-serine + ATP = L-seryl-tRNA(Ser) + AMP + diphosphate + H(+). The catalysed reaction is tRNA(Sec) + L-serine + ATP = L-seryl-tRNA(Sec) + AMP + diphosphate + H(+). The protein operates within aminoacyl-tRNA biosynthesis; selenocysteinyl-tRNA(Sec) biosynthesis; L-seryl-tRNA(Sec) from L-serine and tRNA(Sec): step 1/1. Its function is as follows. Catalyzes the attachment of serine to tRNA(Ser). Is also able to aminoacylate tRNA(Sec) with serine, to form the misacylated tRNA L-seryl-tRNA(Sec), which will be further converted into selenocysteinyl-tRNA(Sec). The chain is Serine--tRNA ligase from Acidiphilium cryptum (strain JF-5).